Reading from the N-terminus, the 66-residue chain is Large ribosomal subunit protein uL30 (66 aa).

Belongs to the universal ribosomal protein uL30 family. Part of the 50S ribosomal subunit.

In Chelativorans sp. (strain BNC1), this protein is Large ribosomal subunit protein uL30.